The chain runs to 391 residues: F-box/kelch-repeat protein At4g05080 (391 aa).

Residues 2-49 (TMMFDLTQDLVKEILSRVPITSLGAVRSTCKGWNALSKDRILCKAKPK) form the F-box domain. 2 Kelch repeats span residues 100-143 (HMYY…TFCL) and 144-194 (RYDN…SASV). The span at 369–385 (RRRRERNSKRKEKKRKG) shows a compositional bias: basic residues. The tract at residues 369 to 391 (RRRRERNSKRKEKKRKGTTNNKV) is disordered.

This Arabidopsis thaliana (Mouse-ear cress) protein is F-box/kelch-repeat protein At4g05080.